The primary structure comprises 980 residues: Serine/threonine-protein phosphatase 4 regulatory subunit 3 (980 aa).

Positions 1-105 (MTTDTRRRVK…EKICQVQGKD (105 aa)) constitute a WH1 domain. Disordered stretches follow at residues 640–668 (RDKM…RQME), 695–861 (VSEK…SLCD), and 885–980 (VTAA…ARQA). The span at 695 to 708 (VSEKNGPQTQNQQK) shows a compositional bias: polar residues. Low complexity-rich tracts occupy residues 709 to 749 (SSPP…SSSP), 757 to 789 (QTQA…QQTQ), 803 to 859 (EAPQ…AASL), and 885 to 926 (VTAA…SPAS). The segment covering 929-939 (QDANSTEGTSS) has biased composition (polar residues). Residues 940–951 (EADKTTAKKGLV) are compositionally biased toward basic and acidic residues. Residues 953-968 (YESDSGEDDYEEDEYS) show a composition bias toward acidic residues.

Belongs to the SMEK family. Serine/threonine-protein phosphatase 4 (PP4) occurs in different assemblies of the catalytic and one or more regulatory subunits. Probably part of a PP4 PPP4C-PPP4R2-PPP4R3 complex containing Pp4-19C, PPP4R2r and flfl. Interacts with mira. In terms of tissue distribution, expressed in neuroblasts.

It localises to the nucleus. Its subcellular location is the membrane. It is found in the cytoplasm. Its function is as follows. Regulatory subunit of serine/threonine-protein phosphatase 4. The probable PP4 complex Pp4-19C-PPP4R2r-flfl (PPP4C-PPP4R2-PPP4R3) is required to prevent caspase induced cell death (in vitro). May be involved in DNA damage repair. Key mediator specific for the localization of mira and associated cell fate determinants during both interphase and mitosis. Nuclear Flfl is required to exclude mira/pros from the nucleus when inefficiently bound to the cytoskeleton/cortex, whereas cytosolic or membrane-associated flfl is required for the cortical association and asymmetric localization of mira/pros/brat/stau at metaphase and anaphase. This chain is Serine/threonine-protein phosphatase 4 regulatory subunit 3 (flfl), found in Drosophila melanogaster (Fruit fly).